Consider the following 663-residue polypeptide: Zinc finger protein 44 (663 aa).

One can recognise a KRAB domain in the interval 52 to 138; it reads VAFEDVAVNF…GETLSQIRNS (87 aa). The C2H2-type 1; atypical zinc-finger motif lies at 189-211; that stretch reads YTHKQCGKGLSYRHSFQTCERPH. Residues 217-239 form a C2H2-type 2; degenerate zinc finger; sequence YDCKECGKTFSSPGNLRRHMVVK. 15 consecutive C2H2-type zinc fingers follow at residues 245-267, 273-295, 301-323, 329-351, 357-379, 385-407, 413-435, 441-463, 469-491, 497-518, 524-546, 552-574, 580-602, 608-630, and 636-658; these read YKCELCGKAFFWPSLLRMHERTH, YECKQCSKAFPVYSSYLRHEKIH, YECKQCSKAFPDYSSYLRHERTH, YKCKQCGKAFSVSGSLRVHERIH, YTCKQCGKAFCHLGSFQRHMIMH, HKCKICGKGFDFPGSARIHEGTH, YECKQCGKLLSHRSSFRRHMMAH, HKCTVCGKAFDSPSVFQRHERTH, YECKQCGKAFRTSSSLRKHETTH, YKCKCGKAFSDLFSFQSHETTH, YECKECGKAFSSFKYFCRHERTH, YECQICGKAFSRFSYLKTHERTH, YECKQCRKAFFWPSFLLRHERTH, YECKHCGKAFSRSSFCREHERTH, and YECKECGKAFSSLSSFNRHKRTH.

Belongs to the krueppel C2H2-type zinc-finger protein family.

It localises to the nucleus. In terms of biological role, may be involved in transcriptional regulation. This is Zinc finger protein 44 (ZNF44) from Homo sapiens (Human).